The primary structure comprises 94 residues: 2S albumin-like cysteine protease inhibitor (94 aa).

3 cysteine pairs are disulfide-bonded: Cys-12–Cys-35, Cys-36–Cys-82, and Cys-48–Cys-89.

This sequence belongs to the 2S seed storage albumins family. As to expression, expressed in seeds (at protein level).

Its function is as follows. Cysteine protease inhibitor that likely functions in defense against insects by inhibiting cysteine proteases in the midgut of herbivore insects such as C.maculatus. Selectively inhibits cathepsin L, as well as papain, ficin and bromelain with lower efficiency. Shows antitumor activity, inhibiting the growth of prostate cancer cell lines PC3 and DU145, and the gastric cancer cell line Hs746T. No activity against cathepsin B or serine proteases (trypsin, human plasma kallikrein and elastase). The polypeptide is 2S albumin-like cysteine protease inhibitor (Araucaria angustifolia (Brazilian pine tree)).